Here is a 184-residue protein sequence, read N- to C-terminus: Nutrient stress-induced DNA-binding protein (184 aa).

This sequence belongs to the Dps family. Hexamer.

Its function is as follows. Involved in protection of chromosomal DNA from damage under nutrient-limited and oxidative stress conditions. Binds heme. This chain is Nutrient stress-induced DNA-binding protein (dpsA), found in Nostoc sp. (strain PCC 7120 / SAG 25.82 / UTEX 2576).